Here is a 221-residue protein sequence, read N- to C-terminus: Carbonic anhydrase (221 aa).

C38, D40, H99, and C102 together coordinate Zn(2+).

It belongs to the beta-class carbonic anhydrase family. Zn(2+) serves as cofactor.

It catalyses the reaction hydrogencarbonate + H(+) = CO2 + H2O. This Helicobacter pylori (strain ATCC 700392 / 26695) (Campylobacter pylori) protein is Carbonic anhydrase (cynT).